The sequence spans 365 residues: UBX domain-containing protein 2B (365 aa).

A disordered region spans residues 1-97 (MADGGASPAQ…MSDDKENQRF (97 aa)). Basic and acidic residues-rich tracts occupy residues 50–63 (DEAK…DKPT) and 73–95 (LKID…KENQ). The SEP domain occupies 175–240 (DVQILLKLWR…MEDHQEQEYV (66 aa)). Residues 286–363 (DSVPATKIQI…DILNTVILQQ (78 aa)) enclose the UBX domain.

The protein belongs to the NSFL1C family.

The protein localises to the nucleus. It is found in the cytoplasm. Its subcellular location is the cytosol. The protein resides in the endoplasmic reticulum. It localises to the golgi apparatus. The protein localises to the cytoskeleton. It is found in the microtubule organizing center. Its subcellular location is the centrosome. Its function is as follows. Adapter protein required for Golgi and endoplasmic reticulum biogenesis. Involved in Golgi and endoplasmic reticulum maintenance during interphase and in their reassembly at the end of mitosis. Regulates the centrosomal levels of kinase AURKA/Aurora A during mitotic progression by promoting AURKA removal from centrosomes in prophase. Also, regulates spindle orientation during mitosis. In Gallus gallus (Chicken), this protein is UBX domain-containing protein 2B (UBXN2B).